Consider the following 257-residue polypeptide: Deoxyribose-phosphate aldolase (257 aa).

Asp102 serves as the catalytic Proton donor/acceptor. Residue Lys166 is the Schiff-base intermediate with acetaldehyde of the active site. Lys198 functions as the Proton donor/acceptor in the catalytic mechanism.

This sequence belongs to the DeoC/FbaB aldolase family. DeoC type 2 subfamily.

It localises to the cytoplasm. The catalysed reaction is 2-deoxy-D-ribose 5-phosphate = D-glyceraldehyde 3-phosphate + acetaldehyde. The protein operates within carbohydrate degradation; 2-deoxy-D-ribose 1-phosphate degradation; D-glyceraldehyde 3-phosphate and acetaldehyde from 2-deoxy-alpha-D-ribose 1-phosphate: step 2/2. Its function is as follows. Catalyzes a reversible aldol reaction between acetaldehyde and D-glyceraldehyde 3-phosphate to generate 2-deoxy-D-ribose 5-phosphate. The polypeptide is Deoxyribose-phosphate aldolase (Shewanella frigidimarina (strain NCIMB 400)).